The chain runs to 151 residues: Deoxyuridine 5'-triphosphate nucleotidohydrolase (151 aa).

Residues 71–73 (RSG), Asn-84, and 88–90 (TID) each bind substrate.

The protein belongs to the dUTPase family. Requires Mg(2+) as cofactor.

It catalyses the reaction dUTP + H2O = dUMP + diphosphate + H(+). Its pathway is pyrimidine metabolism; dUMP biosynthesis; dUMP from dCTP (dUTP route): step 2/2. In terms of biological role, this enzyme is involved in nucleotide metabolism: it produces dUMP, the immediate precursor of thymidine nucleotides and it decreases the intracellular concentration of dUTP so that uracil cannot be incorporated into DNA. The polypeptide is Deoxyuridine 5'-triphosphate nucleotidohydrolase (Gluconobacter oxydans (strain 621H) (Gluconobacter suboxydans)).